Reading from the N-terminus, the 422-residue chain is Dihydroorotase (422 aa).

H53 and H55 together coordinate Zn(2+). Substrate-binding positions include 55 to 57 and N87; that span reads HFR. Residues E138, H172, H223, and D291 each contribute to the Zn(2+) site. Residue D291 is part of the active site. Substrate is bound at residue H295.

Belongs to the metallo-dependent hydrolases superfamily. DHOase family. Class I DHOase subfamily. Requires Zn(2+) as cofactor.

It carries out the reaction (S)-dihydroorotate + H2O = N-carbamoyl-L-aspartate + H(+). It functions in the pathway pyrimidine metabolism; UMP biosynthesis via de novo pathway; (S)-dihydroorotate from bicarbonate: step 3/3. Catalyzes the reversible cyclization of carbamoyl aspartate to dihydroorotate. In Halobacterium salinarum (strain ATCC 700922 / JCM 11081 / NRC-1) (Halobacterium halobium), this protein is Dihydroorotase.